Here is a 354-residue protein sequence, read N- to C-terminus: 3'-5' exonuclease (354 aa).

The disordered stretch occupies residues 1-120 (MERFLTKMPI…PSPEKEKPEK (120 aa)). Basic and acidic residues-rich tracts occupy residues 13–30 (KANEVPKKEAVAKKETPK) and 37–50 (KKDTPKELKDKENA). Basic residues predominate over residues 59–70 (TKGRPGRPAAKR). Residues 71–91 (KNLDTPDVKDEKIAMEEENPP) show a composition bias toward basic and acidic residues. Phosphoserine is present on residues S104, S110, and S112. Residues 149-314 (WVEKQKDDVV…GQVIYRELER (166 aa)) enclose the 3'-5' exonuclease domain. Mg(2+) contacts are provided by D163, E165, and D301.

This sequence belongs to the WRNexo family.

The protein localises to the nucleus. Has exonuclease activity on both single-stranded and duplex templates bearing overhangs, but not blunt ended duplex DNA, and cleaves in a 3'-5' direction. Essential for the formation of DNA replication focal centers. Has an important role in maintaining genome stability. The chain is 3'-5' exonuclease from Drosophila simulans (Fruit fly).